The following is a 491-amino-acid chain: Glutamyl-tRNA(Gln) amidotransferase subunit A (491 aa).

Residues lysine 76 and serine 154 each act as charge relay system in the active site. Residue serine 178 is the Acyl-ester intermediate of the active site.

It belongs to the amidase family. GatA subfamily. In terms of assembly, heterotrimer of A, B and C subunits.

It carries out the reaction L-glutamyl-tRNA(Gln) + L-glutamine + ATP + H2O = L-glutaminyl-tRNA(Gln) + L-glutamate + ADP + phosphate + H(+). Its function is as follows. Allows the formation of correctly charged Gln-tRNA(Gln) through the transamidation of misacylated Glu-tRNA(Gln) in organisms which lack glutaminyl-tRNA synthetase. The reaction takes place in the presence of glutamine and ATP through an activated gamma-phospho-Glu-tRNA(Gln). In Cereibacter sphaeroides (strain ATCC 17029 / ATH 2.4.9) (Rhodobacter sphaeroides), this protein is Glutamyl-tRNA(Gln) amidotransferase subunit A.